We begin with the raw amino-acid sequence, 424 residues long: 2,3-bisphosphoglycerate-independent phosphoglycerate mutase (424 aa).

This sequence belongs to the BPG-independent phosphoglycerate mutase family. A-PGAM subfamily.

It catalyses the reaction (2R)-2-phosphoglycerate = (2R)-3-phosphoglycerate. Its pathway is carbohydrate degradation; glycolysis; pyruvate from D-glyceraldehyde 3-phosphate: step 3/5. Functionally, catalyzes the interconversion of 2-phosphoglycerate and 3-phosphoglycerate. The sequence is that of 2,3-bisphosphoglycerate-independent phosphoglycerate mutase from Aeropyrum pernix (strain ATCC 700893 / DSM 11879 / JCM 9820 / NBRC 100138 / K1).